A 71-amino-acid chain; its full sequence is Long neurotoxin 1 (71 aa).

5 disulfides stabilise this stretch: Cys-3/Cys-20, Cys-14/Cys-41, Cys-26/Cys-30, Cys-45/Cys-56, and Cys-57/Cys-62.

It belongs to the three-finger toxin family. Long-chain subfamily. Type II alpha-neurotoxin sub-subfamily. Expressed by the venom gland.

It is found in the secreted. Binds with high affinity to muscular (alpha-1/CHRNA1) and neuronal (alpha-7/CHRNA7) nicotinic acetylcholine receptor (nAChR) and inhibits acetylcholine from binding to the receptor, thereby impairing neuromuscular and neuronal transmission. The sequence is that of Long neurotoxin 1 from Naja haje haje (Egyptian cobra).